Here is a 190-residue protein sequence, read N- to C-terminus: Putative manganese efflux pump MntP (190 aa).

6 helical membrane-spanning segments follow: residues 3-23 (PISL…AALG), 41-61 (LIFG…GQVA), 69-89 (DHWI…YNGI), 105-125 (FWIL…VGVG), 133-153 (IVVA…IGVM), and 168-188 (IIGG…HLSA).

Belongs to the MntP (TC 9.B.29) family.

It is found in the cell inner membrane. Probably functions as a manganese efflux pump. This chain is Putative manganese efflux pump MntP, found in Pseudomonas syringae pv. syringae (strain B728a).